The primary structure comprises 92 residues: YcgL domain-containing protein VC_1957 (92 aa).

Positions 1–84 (MLCSIYKSPK…PPENLLEQHK (84 aa)) constitute a YcgL domain. Positions 69–92 (FLQLPPPPENLLEQHKERKARQTP) are disordered.

This is YcgL domain-containing protein VC_1957 from Vibrio cholerae serotype O1 (strain ATCC 39315 / El Tor Inaba N16961).